We begin with the raw amino-acid sequence, 252 residues long: C4b-binding protein beta chain (252 aa).

The signal sequence occupies residues 1-17; sequence MFFWCACCLMVAWRVSA. 3 Sushi domains span residues 21-78, 79-136, and 137-193; these read EHCP…ECRL, GHCP…ICKS, and RDCD…VCKL. Cystine bridges form between cysteine 23–cysteine 63, cysteine 49–cysteine 76, cysteine 81–cysteine 121, cysteine 107–cysteine 134, cysteine 139–cysteine 179, and cysteine 165–cysteine 191. 5 N-linked (GlcNAc...) asparagine glycosylation sites follow: asparagine 64, asparagine 71, asparagine 98, asparagine 117, and asparagine 154.

Disulfide-linked complex of alpha and beta chains of 3 possible sorts: a 570 kDa complex of 7 alpha chains and 1 beta chain, a 530 kDa homoheptamer of alpha chains or a 500 kDa complex of 6 alpha chains and 1 beta chain. The central body of the alpha chain homomer supports tentacles, each with the binding site for C4b at the end.

Its subcellular location is the secreted. Controls the classical pathway of complement activation. It binds as a cofactor to C3b/C4b inactivator (C3bINA), which then hydrolyzes the complement fragment C4b. It also accelerates the degradation of the C4bC2a complex (C3 convertase) by dissociating the complement fragment C2a. It also interacts with anticoagulant protein S and with serum amyloid P component. The beta chain binds protein S. The sequence is that of C4b-binding protein beta chain (C4BPB) from Homo sapiens (Human).